The primary structure comprises 118 residues: UPF0102 protein Lxx14785 (118 aa).

It belongs to the UPF0102 family.

The chain is UPF0102 protein Lxx14785 from Leifsonia xyli subsp. xyli (strain CTCB07).